Consider the following 108-residue polypeptide: Tetrahydromethanopterin S-methyltransferase subunit B (108 aa).

Residues 77–99 form a helical membrane-spanning segment; it reads FQGMFFGFWVTMAVLVLVTILAV.

Belongs to the MtrB family. The complex is composed of 8 subunits; MtrA, MtrB, MtrC, MtrD, MtrE, MtrF, MtrG and MtrH.

Its subcellular location is the cell membrane. It catalyses the reaction 5-methyl-5,6,7,8-tetrahydromethanopterin + coenzyme M + 2 Na(+)(in) = 5,6,7,8-tetrahydromethanopterin + methyl-coenzyme M + 2 Na(+)(out). Its pathway is one-carbon metabolism; methanogenesis from CO(2); methyl-coenzyme M from 5,10-methylene-5,6,7,8-tetrahydromethanopterin: step 2/2. In terms of biological role, part of a complex that catalyzes the formation of methyl-coenzyme M and tetrahydromethanopterin from coenzyme M and methyl-tetrahydromethanopterin. This is an energy-conserving, sodium-ion translocating step. This chain is Tetrahydromethanopterin S-methyltransferase subunit B, found in Methanococcus maripaludis (strain DSM 14266 / JCM 13030 / NBRC 101832 / S2 / LL).